Reading from the N-terminus, the 503-residue chain is Probable DNA ligase (503 aa).

Residue Glu210 participates in ATP binding. Lys212 functions as the N6-AMP-lysine intermediate in the catalytic mechanism. The ATP site is built by Arg217, Arg232, Glu261, Phe296, Arg367, and Lys373.

It belongs to the ATP-dependent DNA ligase family. Mg(2+) serves as cofactor.

The catalysed reaction is ATP + (deoxyribonucleotide)n-3'-hydroxyl + 5'-phospho-(deoxyribonucleotide)m = (deoxyribonucleotide)n+m + AMP + diphosphate.. Functionally, DNA ligase that seals nicks in double-stranded DNA during DNA replication, DNA recombination and DNA repair. This chain is Probable DNA ligase, found in Rhodococcus opacus (strain B4).